Here is a 422-residue protein sequence, read N- to C-terminus: UDP-N-acetylglucosamine 1-carboxyvinyltransferase (422 aa).

Position 23-24 (23-24 (KN)) interacts with phosphoenolpyruvate. Position 92 (R92) interacts with UDP-N-acetyl-alpha-D-glucosamine. The Proton donor role is filled by C116. The residue at position 116 (C116) is a 2-(S-cysteinyl)pyruvic acid O-phosphothioketal. UDP-N-acetyl-alpha-D-glucosamine-binding positions include 121–125 (RPVDL), 161–164 (KVSV), D306, and I328.

Belongs to the EPSP synthase family. MurA subfamily.

Its subcellular location is the cytoplasm. The enzyme catalyses phosphoenolpyruvate + UDP-N-acetyl-alpha-D-glucosamine = UDP-N-acetyl-3-O-(1-carboxyvinyl)-alpha-D-glucosamine + phosphate. The protein operates within cell wall biogenesis; peptidoglycan biosynthesis. In terms of biological role, cell wall formation. Adds enolpyruvyl to UDP-N-acetylglucosamine. This is UDP-N-acetylglucosamine 1-carboxyvinyltransferase from Aliivibrio fischeri (strain ATCC 700601 / ES114) (Vibrio fischeri).